Reading from the N-terminus, the 345-residue chain is N-acetyl-gamma-glutamyl-phosphate reductase (345 aa).

The active site involves C151.

It belongs to the NAGSA dehydrogenase family. Type 1 subfamily.

Its subcellular location is the cytoplasm. The enzyme catalyses N-acetyl-L-glutamate 5-semialdehyde + phosphate + NADP(+) = N-acetyl-L-glutamyl 5-phosphate + NADPH + H(+). Its pathway is amino-acid biosynthesis; L-arginine biosynthesis; N(2)-acetyl-L-ornithine from L-glutamate: step 3/4. In terms of biological role, catalyzes the NADPH-dependent reduction of N-acetyl-5-glutamyl phosphate to yield N-acetyl-L-glutamate 5-semialdehyde. The chain is N-acetyl-gamma-glutamyl-phosphate reductase from Clostridium novyi (strain NT).